We begin with the raw amino-acid sequence, 371 residues long: Bifunctional enzyme IspD/IspF (371 aa).

Residues Met-1–Ile-210 form a 2-C-methyl-D-erythritol 4-phosphate cytidylyltransferase region. The 2-C-methyl-D-erythritol 2,4-cyclodiphosphate synthase stretch occupies residues Phe-211–Leu-371. Positions 217 and 219 each coordinate a divalent metal cation. 4-CDP-2-C-methyl-D-erythritol 2-phosphate-binding positions include Asp-217–His-219 and His-243–Ser-244. Residue His-251 participates in a divalent metal cation binding. 4-CDP-2-C-methyl-D-erythritol 2-phosphate-binding positions include Asp-265–Gly-267, Phe-270–Asp-274, Thr-341–Glu-344, Phe-348, and Arg-351.

This sequence in the N-terminal section; belongs to the IspD/TarI cytidylyltransferase family. IspD subfamily. The protein in the C-terminal section; belongs to the IspF family. It depends on a divalent metal cation as a cofactor.

The enzyme catalyses 2-C-methyl-D-erythritol 4-phosphate + CTP + H(+) = 4-CDP-2-C-methyl-D-erythritol + diphosphate. It catalyses the reaction 4-CDP-2-C-methyl-D-erythritol 2-phosphate = 2-C-methyl-D-erythritol 2,4-cyclic diphosphate + CMP. Its pathway is isoprenoid biosynthesis; isopentenyl diphosphate biosynthesis via DXP pathway; isopentenyl diphosphate from 1-deoxy-D-xylulose 5-phosphate: step 2/6. It participates in isoprenoid biosynthesis; isopentenyl diphosphate biosynthesis via DXP pathway; isopentenyl diphosphate from 1-deoxy-D-xylulose 5-phosphate: step 4/6. Its function is as follows. Bifunctional enzyme that catalyzes the formation of 4-diphosphocytidyl-2-C-methyl-D-erythritol from CTP and 2-C-methyl-D-erythritol 4-phosphate (MEP) (IspD), and catalyzes the conversion of 4-diphosphocytidyl-2-C-methyl-D-erythritol 2-phosphate (CDP-ME2P) to 2-C-methyl-D-erythritol 2,4-cyclodiphosphate (ME-CPP) with a corresponding release of cytidine 5-monophosphate (CMP) (IspF). This is Bifunctional enzyme IspD/IspF from Campylobacter lari (strain RM2100 / D67 / ATCC BAA-1060).